The sequence spans 541 residues: Peptidyl-alpha-hydroxyglycine alpha-amidating lyase 1 (541 aa).

An N-terminal signal peptide occupies residues Met1–Ser33. Over Gln34–Ala458 the chain is Extracellular. A glycan (N-linked (GlcNAc...) asparagine) is linked at Asn92. 3 NHL repeats span residues Gly164–Arg205, Leu215–Lys258, and Gly272–Ser314. 2 disulfides stabilise this stretch: Cys228–Cys248 and Cys299–Cys310. Asn315 carries N-linked (GlcNAc...) asparagine glycosylation. The stretch at Lys374–Arg418 is one NHL 4 repeat. The helical transmembrane segment at Ile459–Phe479 threads the bilayer. Topologically, residues Ala480–Ala541 are cytoplasmic. Positions Leu521–Ala541 are disordered.

The protein belongs to the peptidyl-alpha-hydroxyglycine alpha-amidating lyase family. Zn(2+) is required as a cofactor. Post-translationally, N-glycosylated. As to expression, widely expressed. In mature larvae, it is ubiquitously expressed with a low expression in all cells and a stronger expression in a subset of neurons. Colocalizes with neuropeptide proctolin. In adults, weak expression is observed in most neuronal cell bodies and in scattered large cells throughout the protocerebrum and also in the subesophageal neuromeres (at protein level).

It localises to the cell membrane. It catalyses the reaction a [peptide]-C-terminal (2S)-2-hydroxyglycine = a [peptide]-C-terminal amide + glyoxylate. Functionally, peptidyl-alpha-hydroxylglycine alpha-amidating lyase that catalyzes an essential reaction in C-terminal alpha-amidation of peptides. Mediates the dismutation of the unstable peptidyl(2-hydroxyglycine) intermediate to glyoxylate and the corresponding desglycine peptide amide. C-terminal amidation of peptides such as neuropeptides is essential for full biological activity. This Drosophila melanogaster (Fruit fly) protein is Peptidyl-alpha-hydroxyglycine alpha-amidating lyase 1 (Pal1).